We begin with the raw amino-acid sequence, 283 residues long: Bifunctional protein FolD (283 aa).

Residues 165–167 (GRS), Ser190, and Val231 contribute to the NADP(+) site.

It belongs to the tetrahydrofolate dehydrogenase/cyclohydrolase family. As to quaternary structure, homodimer.

The catalysed reaction is (6R)-5,10-methylene-5,6,7,8-tetrahydrofolate + NADP(+) = (6R)-5,10-methenyltetrahydrofolate + NADPH. It carries out the reaction (6R)-5,10-methenyltetrahydrofolate + H2O = (6R)-10-formyltetrahydrofolate + H(+). It functions in the pathway one-carbon metabolism; tetrahydrofolate interconversion. In terms of biological role, catalyzes the oxidation of 5,10-methylenetetrahydrofolate to 5,10-methenyltetrahydrofolate and then the hydrolysis of 5,10-methenyltetrahydrofolate to 10-formyltetrahydrofolate. This is Bifunctional protein FolD from Bacillus velezensis (strain DSM 23117 / BGSC 10A6 / LMG 26770 / FZB42) (Bacillus amyloliquefaciens subsp. plantarum).